The sequence spans 319 residues: ATP-dependent 6-phosphofructokinase (319 aa).

Position 11 (Gly11) interacts with ATP. ADP is bound at residue 21-25 (RAVVR). ATP is bound by residues 72 to 73 (RC) and 102 to 105 (GDGS). Mg(2+) is bound at residue Asp103. 125–127 (TID) provides a ligand contact to substrate. Asp127 (proton acceptor) is an active-site residue. Position 154 (Arg154) interacts with ADP. Substrate contacts are provided by residues Arg162 and 169–171 (MGR). ADP is bound by residues 185–187 (GAE), Arg211, and 213–215 (KKH). Substrate-binding positions include Glu222, Arg243, and 249-252 (HIQR).

Belongs to the phosphofructokinase type A (PFKA) family. ATP-dependent PFK group I subfamily. Prokaryotic clade 'B1' sub-subfamily. In terms of assembly, homotetramer. Mg(2+) serves as cofactor.

It is found in the cytoplasm. It carries out the reaction beta-D-fructose 6-phosphate + ATP = beta-D-fructose 1,6-bisphosphate + ADP + H(+). The protein operates within carbohydrate degradation; glycolysis; D-glyceraldehyde 3-phosphate and glycerone phosphate from D-glucose: step 3/4. Allosterically activated by ADP and other diphosphonucleosides, and allosterically inhibited by phosphoenolpyruvate. In terms of biological role, catalyzes the phosphorylation of D-fructose 6-phosphate to fructose 1,6-bisphosphate by ATP, the first committing step of glycolysis. The sequence is that of ATP-dependent 6-phosphofructokinase from Bacillus velezensis (strain DSM 23117 / BGSC 10A6 / LMG 26770 / FZB42) (Bacillus amyloliquefaciens subsp. plantarum).